Consider the following 959-residue polypeptide: Translation initiation factor IF-2 (959 aa).

Positions 33-373 (SHASSVEEAD…PVTERKFHEL (341 aa)) are disordered. Residues 46–60 (IASSFSAGVTKNVQA) show a composition bias toward polar residues. Over residues 63–73 (AKDKQVAEQKA) the composition is skewed to basic and acidic residues. The segment covering 76-100 (AKATTPQPAASKAAEKPAAATQEAS) has biased composition (low complexity). 3 stretches are compositionally biased toward basic and acidic residues: residues 112-125 (FKAEREARAKEQVA), 134-143 (SNDRKSDYRQ), and 179-192 (NDGHRQAGNRDKNR). Residues 193-211 (SFNANSRQQDIGRQGQTQA) show a composition bias toward polar residues. Basic and acidic residues-rich tracts occupy residues 234–258 (ARQRESRFREQEEAKRLEQQARQEA) and 266–276 (QTEDKKHREAP). The segment covering 277–287 (AKATEPAEPVA) has biased composition (low complexity). Residues 306–323 (NRPDKAHDRDHGLEDGQK) show a composition bias toward basic and acidic residues. Residues 328–346 (SWNSQNQVRNQKNSNWNNN) are compositionally biased toward low complexity. A compositionally biased stretch (basic residues) spans 347-357 (KKNKKGKHHKN). One can recognise a tr-type G domain in the interval 460-629 (ERAPVVTIMG…LLVAEVEELK (170 aa)). The segment at 469-476 (GHVDHGKT) is G1. 469 to 476 (GHVDHGKT) serves as a coordination point for GTP. The tract at residues 494 to 498 (GITQH) is G2. Positions 515–518 (DTPG) are G3. GTP-binding positions include 515–519 (DTPGH) and 569–572 (NKID). The tract at residues 569–572 (NKID) is G4. Positions 605-607 (SAK) are G5.

This sequence belongs to the TRAFAC class translation factor GTPase superfamily. Classic translation factor GTPase family. IF-2 subfamily.

Its subcellular location is the cytoplasm. Its function is as follows. One of the essential components for the initiation of protein synthesis. Protects formylmethionyl-tRNA from spontaneous hydrolysis and promotes its binding to the 30S ribosomal subunits. Also involved in the hydrolysis of GTP during the formation of the 70S ribosomal complex. In Streptococcus equi subsp. zooepidemicus (strain H70), this protein is Translation initiation factor IF-2.